The sequence spans 1315 residues: Serine/threonine-protein kinase 36 (1315 aa).

In terms of domain architecture, Protein kinase spans 4 to 254 (YHVLEMIGEG…WPDLLYHPFI (251 aa)). Residues 10–18 (IGEGSFGRV) and lysine 33 each bind ATP. Aspartate 125 acts as the Proton acceptor in catalysis. Disordered regions lie at residues 312-345 (EAMQ…PRLG) and 365-405 (SWAE…RSTD). Residues 379–397 (RENRTTPDCERAFPEERPE) are compositionally biased toward basic and acidic residues.

It belongs to the protein kinase superfamily. Ser/Thr protein kinase family. As to quaternary structure, interacts with SPAG16 and KIF27. Requires Mg(2+) as cofactor.

Its subcellular location is the cytoplasm. The protein resides in the nucleus. It localises to the cytoskeleton. It is found in the cilium axoneme. It catalyses the reaction L-seryl-[protein] + ATP = O-phospho-L-seryl-[protein] + ADP + H(+). The catalysed reaction is L-threonyl-[protein] + ATP = O-phospho-L-threonyl-[protein] + ADP + H(+). Functionally, serine/threonine protein kinase which plays an important role in the sonic hedgehog (Shh) pathway by regulating the activity of GLI transcription factors. Controls the activity of the transcriptional regulators GLI1, GLI2 and GLI3 by opposing the effect of SUFU and promoting their nuclear localization. GLI2 requires an additional function of STK36 to become transcriptionally active, but the enzyme does not need to possess an active kinase catalytic site for this to occur. Required for postnatal development, possibly by regulating the homeostasis of cerebral spinal fluid or ciliary function. Essential for construction of the central pair apparatus of motile cilia. This Pongo abelii (Sumatran orangutan) protein is Serine/threonine-protein kinase 36.